The primary structure comprises 431 residues: Glutamyl-tRNA(Gln) amidotransferase subunit A (431 aa).

Catalysis depends on charge relay system residues K55 and S130. S154 acts as the Acyl-ester intermediate in catalysis.

This sequence belongs to the amidase family. GatA subfamily. As to quaternary structure, heterotrimer of A, B and C subunits.

The enzyme catalyses L-glutamyl-tRNA(Gln) + L-glutamine + ATP + H2O = L-glutaminyl-tRNA(Gln) + L-glutamate + ADP + phosphate + H(+). Its function is as follows. Allows the formation of correctly charged Gln-tRNA(Gln) through the transamidation of misacylated Glu-tRNA(Gln) in organisms which lack glutaminyl-tRNA synthetase. The reaction takes place in the presence of glutamine and ATP through an activated gamma-phospho-Glu-tRNA(Gln). This chain is Glutamyl-tRNA(Gln) amidotransferase subunit A, found in Methanococcus maripaludis (strain C7 / ATCC BAA-1331).